The primary structure comprises 313 residues: WD repeat-containing protein 82 (313 aa).

WD repeat units lie at residues 19 to 58, 105 to 144, 146 to 184, 192 to 231, 236 to 276, and 280 to 313; these read ENSD…PKRT, GHSK…CQGL, HLQG…KGPF, DRTC…VMHT, NNSK…KVAV, and KHTG…TIDD.

This sequence belongs to the WD repeat SWD2 family. Component of the SET1/COMPASS complex. Component of the PNUTS-PP1 phosphatase complex.

It localises to the nucleus. The protein resides in the chromosome. The protein localises to the cytoplasm. In terms of biological role, regulatory component of the SET1/COMPASS complex implicated in the tethering of this complex to transcriptional start sites of active genes. Facilitates histone H3 'Lys-4' methylation (H3K4me) via recruitment of the SETD1A or SETD1B to the 'Ser-5' phosphorylated C-terminal domain (CTD) of RNA polymerase II large subunit (POLR2A). Component of the PNUTS-PP1 protein phosphatase complex, a protein phosphatase 1 (PP1) complex that promotes RNA polymerase II transcription pause-release, allowing transcription elongation. The chain is WD repeat-containing protein 82 (wdr82) from Xenopus tropicalis (Western clawed frog).